The sequence spans 63 residues: Toxin S6C6 (63 aa).

Cystine bridges form between Cys-3/Cys-24, Cys-6/Cys-11, Cys-17/Cys-39, Cys-43/Cys-55, and Cys-56/Cys-61.

It belongs to the three-finger toxin family. Ancestral subfamily. Orphan group XIX sub-subfamily. Expressed by the venom gland.

The protein resides in the secreted. May enhance presynaptic acetylcholine release. The polypeptide is Toxin S6C6 (Dendroaspis jamesoni kaimosae (Eastern Jameson's mamba)).